The primary structure comprises 251 residues: PF03932 family protein CutC (251 aa).

This sequence belongs to the CutC family.

The protein resides in the cytoplasm. In Agrobacterium fabrum (strain C58 / ATCC 33970) (Agrobacterium tumefaciens (strain C58)), this protein is PF03932 family protein CutC.